A 209-amino-acid polypeptide reads, in one-letter code: uncharacterized protein (209 aa).

Transmembrane regions (helical) follow at residues 21–41 (LAYLNVLWILFSLAGLVVFGL), 81–101 (ILGLIVVTAALFLFADMRIAA), 107–127 (VLVNVFVSISLIFAFVVLYVF), and 159–179 (AAGAVGVLCLVLFHVTFLLFF).

The protein resides in the cell membrane. This is an uncharacterized protein from Bacillus subtilis (strain 168).